Consider the following 337-residue polypeptide: MKICVHGAGAWGTALAVNAAGRHEVTLWARDAAQAEAIAKARENVRYLPGLALPPALTVRAGDLHQARAGAELVVVATPMAALRQQLMALRGTTAPVAWLCKGVEPALDASSPASYGLLAHEIWGQVAPELMAGVLSGPSFAQEVAEGRPTALVAASPHAAVRDALVEAFHGPALRVYANDDIVGVEVGGAVKNVLAIATGLCDGLALGLNARAALITRGLAEMTRFGLALGARAETFMGLSGLGDLVLTATGDLSRNRKVGLLLAQGHTLAQAVASLGHVAEGVYCARTVVQRARGLGVEMPIAEGVVALLDGRLSPQEAVASLTGRDPVPESVRP.

Residues Trp-11, Arg-30, and Lys-102 each contribute to the NADPH site. Residues Lys-102, Gly-138, and Ser-140 each contribute to the sn-glycerol 3-phosphate site. Ala-142 contacts NADPH. Positions 193, 246, 256, 257, and 258 each coordinate sn-glycerol 3-phosphate. Lys-193 serves as the catalytic Proton acceptor. An NADPH-binding site is contributed by Arg-257. NADPH is bound by residues Val-281 and Glu-283.

Belongs to the NAD-dependent glycerol-3-phosphate dehydrogenase family.

The protein resides in the cytoplasm. The catalysed reaction is sn-glycerol 3-phosphate + NAD(+) = dihydroxyacetone phosphate + NADH + H(+). It catalyses the reaction sn-glycerol 3-phosphate + NADP(+) = dihydroxyacetone phosphate + NADPH + H(+). Its pathway is membrane lipid metabolism; glycerophospholipid metabolism. Its function is as follows. Catalyzes the reduction of the glycolytic intermediate dihydroxyacetone phosphate (DHAP) to sn-glycerol 3-phosphate (G3P), the key precursor for phospholipid synthesis. The protein is Glycerol-3-phosphate dehydrogenase [NAD(P)+] of Variovorax paradoxus (strain S110).